The primary structure comprises 484 residues: UDP-N-acetylmuramate--L-alanine ligase (484 aa).

Position 126–132 (126–132 (GTHGKTT)) interacts with ATP.

This sequence belongs to the MurCDEF family.

The protein localises to the cytoplasm. It carries out the reaction UDP-N-acetyl-alpha-D-muramate + L-alanine + ATP = UDP-N-acetyl-alpha-D-muramoyl-L-alanine + ADP + phosphate + H(+). The protein operates within cell wall biogenesis; peptidoglycan biosynthesis. In terms of biological role, cell wall formation. The chain is UDP-N-acetylmuramate--L-alanine ligase from Aeromonas hydrophila subsp. hydrophila (strain ATCC 7966 / DSM 30187 / BCRC 13018 / CCUG 14551 / JCM 1027 / KCTC 2358 / NCIMB 9240 / NCTC 8049).